Reading from the N-terminus, the 310-residue chain is uncharacterized protein (310 aa).

Residue His239 is part of the active site.

This sequence belongs to the IUNH family.

The protein resides in the cytoplasm. The protein localises to the nucleus. This is an uncharacterized protein from Schizosaccharomyces pombe (strain 972 / ATCC 24843) (Fission yeast).